The chain runs to 635 residues: Iron transport multicopper oxidase FET3 (635 aa).

The N-terminal stretch at 1 to 17 (MMVPLLLSTYFITAVYG) is a signal peptide. Residues 18 to 559 (ATHTFHWTTG…KSIPTGFTKK (542 aa)) lie on the Extracellular side of the membrane. Plastocyanin-like domains lie at 42–140 (ITCN…FVIE) and 190–292 (NLIL…LQLN). Residues Asn70 and Asn73 are each glycosylated (N-linked (GlcNAc...) asparagine). Cu cation is bound by residues His77 and His79. N-linked (GlcNAc...) asparagine glycosylation occurs at Asn109. Residues His122 and His124 each contribute to the Cu cation site. Residues Asn194, Asn198, Asn244, Asn265, Asn292, and Asn359 are each glycosylated (N-linked (GlcNAc...) asparagine). Positions 382 to 501 (NPFIYGTNTN…QGLAVVMVED (120 aa)) constitute a Plastocyanin-like 3 domain. The Cu cation site is built by His413, His416, and His418. Residue Asn443 is glycosylated (N-linked (GlcNAc...) asparagine). Cu cation is bound by residues His483, Cys484, His485, and His489. N-linked (GlcNAc...) asparagine glycosylation is present at Asn535. The chain crosses the membrane as a helical span at residues 560-580 (GIIAMTFSCLAGVLGITMIAI). The Cytoplasmic portion of the chain corresponds to 581-628 (YGFSEIPEPEIKVMRNLHLNPEDVLEKTSSSSVISASNSSSLEDSRNQ).

Belongs to the multicopper oxidase family. Cu cation serves as cofactor.

Its subcellular location is the cell membrane. Its function is as follows. Iron transport multicopper ferroxidase required for Fe(2+) high affinity uptake. Required to oxidize Fe(2+) and release it from the transporter. Essential component of copper-dependent iron transport. This chain is Iron transport multicopper oxidase FET3 (FET3), found in Candida glabrata (strain ATCC 2001 / BCRC 20586 / JCM 3761 / NBRC 0622 / NRRL Y-65 / CBS 138) (Yeast).